Reading from the N-terminus, the 104-residue chain is Small ribosomal subunit protein uS10 (104 aa).

The protein belongs to the universal ribosomal protein uS10 family. As to quaternary structure, part of the 30S ribosomal subunit.

Its function is as follows. Involved in the binding of tRNA to the ribosomes. In Alkaliphilus oremlandii (strain OhILAs) (Clostridium oremlandii (strain OhILAs)), this protein is Small ribosomal subunit protein uS10.